The sequence spans 459 residues: Elongation factor 1-alpha 2 (459 aa).

The tr-type G domain occupies 5–242; the sequence is KTHINIVVIG…DCIIPPQRPT (238 aa). Residues 14–21 are G1; the sequence is GHVDSGKS. Residues 70-74 are G2; sequence GITID. A G3 region spans residues 91–94; sequence DAPG. The tract at residues 153–156 is G4; the sequence is NKMD. Positions 194–196 are G5; it reads SGF. A 5-glutamyl glycerylphosphorylethanolamine mark is found at Glu301 and Glu374.

Belongs to the TRAFAC class translation factor GTPase superfamily. Classic translation factor GTPase family. EF-Tu/EF-1A subfamily.

It is found in the cytoplasm. In terms of biological role, this protein promotes the GTP-dependent binding of aminoacyl-tRNA to the A-site of ribosomes during protein biosynthesis. This Oscheius tipulae protein is Elongation factor 1-alpha 2 (eft-2).